Here is a 180-residue protein sequence, read N- to C-terminus: Transcription factor HES-7.1-B (180 aa).

Residues 13–70 (HRKLLKPLVEKRRRERINNSLEKLRIFLSQTLKSEKLKNPKVEKAEILECTVQFLQSR) form the bHLH domain. The region spanning 84–116 (YQSGFQHCLETTLHFMNSKPDMNGVTKELLSHQ) is the Orange domain. A WRPW motif motif is present at residues 176–179 (WRPW).

In terms of assembly, transcription repression requires formation of a complex with a corepressor protein of the Groucho/TLE family. Expressed in the presumptive midbrain-hindbrain boundary (MHB) as early as the early gastrula stage (stage 10.5). Expression in the MHB continues through to tailbud stage. Also transiently expressed in the eye anlage at late neurula stage.

The protein localises to the nucleus. Its function is as follows. Transcriptional repressor. Represses transcription from both N box- and E box-containing promoters. Demarcates the prospective midbrain-hindbrain boundary (MHB) region in the neuroectoderm in early gastrulae embryos by repressing transcription of a number of target genes. The sequence is that of Transcription factor HES-7.1-B (hes7.1-b) from Xenopus laevis (African clawed frog).